The chain runs to 753 residues: Probable TonB-dependent siderophore receptor PiuA (753 aa).

The signal sequence occupies residues 1–35 (MSRQSTDTAVSSQRLLASAIGVAITAIAAPQAAQA). Residues 79-185 (PLLDTPKTVT…TGGSLNLISK (107 aa)) enclose the TBDR plug domain. The region spanning 190–753 (DNFTDAGFTW…TALLGVNFHF (564 aa)) is the TBDR beta-barrel domain. Cysteine 420 and cysteine 430 form a disulfide bridge.

Belongs to the TonB-dependent receptor family.

The protein resides in the cell outer membrane. Involved in the initial step of iron uptake by binding iron chelating siderophores, thereby allowing extraction of iron from the environment. Probably involved in the transport of siderophores, including host catecholamines such as dopamine. The protein is Probable TonB-dependent siderophore receptor PiuA of Pseudomonas aeruginosa (strain ATCC 15692 / DSM 22644 / CIP 104116 / JCM 14847 / LMG 12228 / 1C / PRS 101 / PAO1).